The chain runs to 131 residues: Translation initiation factor 5A (131 aa).

Position 37 is a hypusine (Lys37).

Belongs to the eIF-5A family.

The protein resides in the cytoplasm. Functionally, functions by promoting the formation of the first peptide bond. This is Translation initiation factor 5A (eIF5A) from Methanococcus maripaludis (strain C7 / ATCC BAA-1331).